Here is a 930-residue protein sequence, read N- to C-terminus: MPSLLSLVLTFLAVSSPSCCQNSDTASPKASNGASFPWNNMRLPEYITPIHYDLMIHANLSTLTFWGKTEVEITVSQPTSTIIMHSHQLQISKATLRRGAEEMLPEEPLKLMEYSAHEQVALLTAQPLLAGSVYTVIITYAANLSENFHGFYKSTYRTQEGERRILAATQFEPTAARMAFPCFDEPALKASFSIKIKRDPRHLAISNMPLVKSVTVAEGLIEDHFDITVKMSTYLVAFIISDFKSVSKMTKSGVKVSVYAVPDKINQADYALDAAVTLLEFYEDYFSIPYPLPKQDLAAIPDFQSGAMENWGLTTYRESALLYDKEKSSASSKLGITMTVSHELAHQWFGNLVTMEWWNDLWLNEGFAKFMEFVSVTVTHPELKVEEYFFGKCFNAMEVDALNSSHPVSTPVENPAQIREMFDEVSYEKGACILNMLRDYLSADTFKRGIVQYLQKYSYKNTKNEDLWNSMMHICPTDGTQTMDGFCSRNQHSSSTSHWRQEVIDIKSMMNTWTLQKGFPLITITVRGRNVHLKQEHYMKGSECFPETGSLWHVPLTFITSKSDSVQRFLLKTKTDVIILPEAVEWIKFNVGMNGYYIVHYGDDGWASLNGLLKEAHTTISSNDRASLINNAFQLVSIGKLSIEKALDLILYLKNETEIMPIFQGLNELIPMYKLMEKRDMVEVETQFKDFLLRLLKDLINKQTWTDEGSVSERMLRSQLLLLACVHRYQLCVQRAERYFREWKASNGNMSLPIDVTLAVFAVGAQNTEGWDFLYSKYQSSLSSTEKSQIEFSLCISQDPEKLQWLLDQSFKGEIIKTQEFPHILTLIGRNPVGYPLAWKFLKENWNKIVQKFELGSSSIAHMVMGTTNQFSTRARLEEVKGFFSSLKKNGSQLRCVQQTIETIEENIRWMDKNFDKIRLWLQKERQELL.

Residues 1 to 2 (MP) lie on the Cytoplasmic side of the membrane. The helical; Signal-anchor for type II membrane protein transmembrane segment at 3–23 (SLLSLVLTFLAVSSPSCCQNS) threads the bilayer. Residues 24–930 (DTASPKASNG…WLQKERQELL (907 aa)) are Lumenal-facing. 2 N-linked (GlcNAc...) asparagine glycosylation sites follow: N59 and N143. Residues E172 and 306–310 (GAMEN) each bind substrate. Residue H342 participates in Zn(2+) binding. E343 functions as the Proton acceptor in the catalytic mechanism. 2 residues coordinate Zn(2+): H346 and E365. C393 and C432 are oxidised to a cystine. 2 N-linked (GlcNAc...) asparagine glycosylation sites follow: N403 and N655. A disulfide bond links C725 and C732. N-linked (GlcNAc...) asparagine glycans are attached at residues N749 and N890.

Belongs to the peptidase M1 family. In terms of assembly, monomer. May also exist as a heterodimer; with ERAP2. Interacts with RBMX. Zn(2+) is required as a cofactor. N-glycosylated. Ubiquitous.

The protein localises to the endoplasmic reticulum membrane. In terms of biological role, aminopeptidase that plays a central role in peptide trimming, a step required for the generation of most HLA class I-binding peptides. Peptide trimming is essential to customize longer precursor peptides to fit them to the correct length required for presentation on MHC class I molecules. Strongly prefers substrates 9-16 residues long. Rapidly degrades 13-mer to a 9-mer and then stops. Preferentially hydrolyzes the residue Leu and peptides with a hydrophobic C-terminus, while it has weak activity toward peptides with charged C-terminus. May play a role in the inactivation of peptide hormones. May be involved in the regulation of blood pressure through the inactivation of angiotensin II and/or the generation of bradykinin in the kidney. The sequence is that of Endoplasmic reticulum aminopeptidase 1 (Erap1) from Rattus norvegicus (Rat).